The sequence spans 106 residues: MVTTNRLVLSGTVCKTPVRKVSPSGIPHCQFVLEHRSTQQEAGFSRQTWCRMPIIVSGQQSQALTHSITVGSQLTVEGFISCHQGRNGLNKLVLHAEQIEFIDSGD.

The 100-residue stretch at 4–103 folds into the SSB domain; sequence TNRLVLSGTV…LHAEQIEFID (100 aa).

It belongs to the PriB family. As to quaternary structure, homodimer. Interacts with PriA and DnaT. Component of the replication restart primosome. Primosome assembly occurs via a 'hand-off' mechanism. PriA binds to replication forks, subsequently PriB then DnaT bind; DnaT then displaces ssDNA to generate the helicase loading substrate.

Involved in the restart of stalled replication forks, which reloads the replicative helicase on sites other than the origin of replication; the PriA-PriB pathway is the major replication restart pathway. During primosome assembly it facilitates complex formation between PriA and DnaT on DNA; stabilizes PriA on DNA. Stimulates the DNA unwinding activity of PriA helicase. This chain is Replication restart protein PriB, found in Yersinia enterocolitica serotype O:8 / biotype 1B (strain NCTC 13174 / 8081).